Consider the following 155-residue polypeptide: Riboflavin kinase (155 aa).

Glycine 15, lysine 21, threonine 27, and asparagine 29 together coordinate ATP. Mg(2+) is bound by residues threonine 27 and asparagine 29. Glutamate 79 (nucleophile) is an active-site residue. ATP is bound by residues isoleucine 82, histidine 84, and tyrosine 91. The FMN site is built by arginine 104, lysine 107, and phenylalanine 109.

Monomer. Directly interacts with TNFRSF1A death domain. TNFRSF1A-binding may be supported by TRADD. In the absence of TNFRSF1A, interacts with TRADD. Independently of TNFRSF1A, interacts with the NADPH oxidase subunit CYBA. Requires Zn(2+) as cofactor. Mg(2+) is required as a cofactor. In terms of tissue distribution, detected in brain, placenta and urinary bladder.

The protein resides in the cytoplasm. The catalysed reaction is riboflavin + ATP = FMN + ADP + H(+). It participates in cofactor biosynthesis; FMN biosynthesis; FMN from riboflavin (ATP route): step 1/1. In terms of biological role, catalyzes the phosphorylation of riboflavin (vitamin B2) to form flavin-mononucleotide (FMN), hence rate-limiting enzyme in the synthesis of FAD. Essential for TNF-induced reactive oxygen species (ROS) production. Through its interaction with both TNFRSF1A and CYBA, physically and functionally couples TNFRSF1A to NADPH oxidase. TNF-activation of RFK may enhance the incorporation of FAD in NADPH oxidase, a critical step for the assembly and activation of NADPH oxidase. The chain is Riboflavin kinase (RFK) from Homo sapiens (Human).